Consider the following 211-residue polypeptide: MYQPDFPPVPFRLGLYPVVDSVQWIERLLDAGVRTLQLRIKDRRDEEVEADVVAAIALGRRYNARLFINDYWRLAIKHQAYGVHLGQEDLQATDLNAIRAAGLRLGVSTHDDMEIDVALAARPSYIALGHVFPTQTKQMPSAPQGLEQLARHVERLSDYPTVAIGGISLARAPAVIATGVGSIAVVSAITQAADWRLATAQLLEIAGVGDE.

4-amino-2-methyl-5-(diphosphooxymethyl)pyrimidine is bound by residues 37-41 (QLRIK) and Asn69. Residues Asp70 and Asp89 each contribute to the Mg(2+) site. A 4-amino-2-methyl-5-(diphosphooxymethyl)pyrimidine-binding site is contributed by Ser108. 134-136 (TQT) provides a ligand contact to 2-[(2R,5Z)-2-carboxy-4-methylthiazol-5(2H)-ylidene]ethyl phosphate. Lys137 is a 4-amino-2-methyl-5-(diphosphooxymethyl)pyrimidine binding site. Residues Gly166 and 186–187 (VS) each bind 2-[(2R,5Z)-2-carboxy-4-methylthiazol-5(2H)-ylidene]ethyl phosphate.

Belongs to the thiamine-phosphate synthase family. The cofactor is Mg(2+).

It carries out the reaction 2-[(2R,5Z)-2-carboxy-4-methylthiazol-5(2H)-ylidene]ethyl phosphate + 4-amino-2-methyl-5-(diphosphooxymethyl)pyrimidine + 2 H(+) = thiamine phosphate + CO2 + diphosphate. The catalysed reaction is 2-(2-carboxy-4-methylthiazol-5-yl)ethyl phosphate + 4-amino-2-methyl-5-(diphosphooxymethyl)pyrimidine + 2 H(+) = thiamine phosphate + CO2 + diphosphate. The enzyme catalyses 4-methyl-5-(2-phosphooxyethyl)-thiazole + 4-amino-2-methyl-5-(diphosphooxymethyl)pyrimidine + H(+) = thiamine phosphate + diphosphate. It participates in cofactor biosynthesis; thiamine diphosphate biosynthesis; thiamine phosphate from 4-amino-2-methyl-5-diphosphomethylpyrimidine and 4-methyl-5-(2-phosphoethyl)-thiazole: step 1/1. Its function is as follows. Condenses 4-methyl-5-(beta-hydroxyethyl)thiazole monophosphate (THZ-P) and 2-methyl-4-amino-5-hydroxymethyl pyrimidine pyrophosphate (HMP-PP) to form thiamine monophosphate (TMP). The protein is Thiamine-phosphate synthase of Escherichia coli O157:H7.